The chain runs to 550 residues: Rhodopsin kinase grk7-b (550 aa).

The interval 22–45 is disordered; it reads SSEGDAKELQKRRKSLSLPPPDVS. At Ser36 the chain carries Phosphoserine. In terms of domain architecture, RGS spans 57–174; sequence YQSICVEQPI…QNSPFYDRFL (118 aa). Residues 189–451 form the Protein kinase domain; that stretch reads FYEFRILGKG…DDDPRKHAFF (263 aa). Residues 195 to 203 and Lys218 contribute to the ATP site; that span reads LGKGGFGEV. Asp314 serves as the catalytic Proton acceptor. The 66-residue stretch at 452-517 folds into the AGC-kinase C-terminal domain; that stretch reads KSINFQRLEA…GAVPISWQKE (66 aa). The residue at position 487 (Ser487) is a Phosphoserine. Positions 531-550 are disordered; sequence SREVTGGGNSGEKSGVCSIL. Cys547 is subject to Cysteine methyl ester. Cys547 is lipidated: S-geranylgeranyl cysteine. Residues 548 to 550 constitute a propeptide, removed in mature form; that stretch reads SIL.

This sequence belongs to the protein kinase superfamily. AGC Ser/Thr protein kinase family. GPRK subfamily. Post-translationally, autophosphorylated in vitro at Ser-487. Phosphorylation at Ser-36 is regulated by light and activated by cAMP. As to expression, retina, cones.

Its subcellular location is the membrane. It catalyses the reaction L-threonyl-[rhodopsin] + ATP = O-phospho-L-threonyl-[rhodopsin] + ADP + H(+). The enzyme catalyses L-seryl-[rhodopsin] + ATP = O-phospho-L-seryl-[rhodopsin] + ADP + H(+). Retina-specific kinase involved in the shutoff of the photoresponse and adaptation to changing light conditions via cone opsin phosphorylation, including rhodopsin (RHO). This Xenopus laevis (African clawed frog) protein is Rhodopsin kinase grk7-b (grk7-b).